The chain runs to 2275 residues: Serine-rich adhesin for platelets (2275 aa).

Positions 1-89 (MSKRQKEFHD…VNMLHDQQAF (89 aa)) are cleaved as a signal peptide. The segment at 90-264 (AASDAPLTSE…TANTITVNKD (175 aa)) is serine-rich repeat region 1, SRR1. Positions 100-111 (LNTQSETVGNQN) are enriched in polar residues. Disordered stretches follow at residues 100-229 (LNTQ…STST) and 751-2247 (NSMS…GLLG). A compositionally biased stretch (low complexity) spans 112-128 (STTIEASTSTADSTSVT). Residues 129–140 (KNSSSVQTSNSD) are compositionally biased toward polar residues. Residues 150–229 (VTSTTNSTSN…NKTSTTSTST (80 aa)) are compositionally biased toward low complexity. The segment at 265–751 (NLKQYMTTSG…TTFKYEVTRN (487 aa)) is non-repeat region (NRR). Low complexity-rich tracts occupy residues 752 to 1392 (SMSD…LSLS) and 1402 to 2218 (SNSA…ATSE). A serine-rich repeat region 2, SRR2 region spans residues 752–2236 (SMSDSVSTSG…AQSEKRLPDT (1485 aa)). Positions 2233 to 2237 (LPDTG) match the LPXTG sorting signal motif. Thr2236 is subject to Pentaglycyl murein peptidoglycan amidated threonine. Positions 2237 to 2275 (GDSIKQNGLLGGVMTLLVGLGLMKRKKKKDENDQDDSQA) are cleaved as a propeptide — removed by sortase.

This sequence belongs to the serine-rich repeat protein (SRRP) family. Interacts with human gp-340 (DMBT1). In terms of processing, proteolytically cleaved by a metalloprotease. Glycosylated. It is probable that most of the Ser residues in SSR1 and SSR2 are O-GlcNAcylated. Sequential glycosylation by sugar transferases are able to generate complex sugar polymorphisms.

It localises to the secreted. It is found in the cell wall. Its function is as follows. Mediates binding to human platelets, possibly through a receptor-ligand interaction. Probably associated with virulence in endovascular infection. Interacts with host (human) gp-340 via the non-repeat region (NRR or binding region). Binding is inhibited by N-acetylneuraminic acid (NeuAc). This Staphylococcus aureus (strain MW2) protein is Serine-rich adhesin for platelets (sraP).